The primary structure comprises 780 residues: Subtilisin-like protease SBT5.1 (780 aa).

The signal sequence occupies residues 1–25 (MMRCLTITIMFFMFFFLSVIQKCKS). Positions 26-106 (ETSKSGDYII…VFPDQMLQLH (81 aa)) are cleaved as a propeptide — activation peptide. The 74-residue stretch at 33 to 106 (YIIYMGAASS…VFPDQMLQLH (74 aa)) folds into the Inhibitor I9 domain. The Peptidase S8 domain maps to 110 to 617 (SWDFLVQESY…AGQVTIFGPS (508 aa)). The active-site Charge relay system is Asp147. Asn197 carries an N-linked (GlcNAc...) asparagine glycan. His215 (charge relay system) is an active-site residue. Asn230 carries an N-linked (GlcNAc...) asparagine glycan. The 85-residue stretch at 385–469 (IDANEEAARN…PEDGIQIMSY (85 aa)) folds into the PA domain. A glycan (N-linked (GlcNAc...) asparagine) is linked at Asn471. Residue Ser550 is the Charge relay system of the active site. N-linked (GlcNAc...) asparagine glycosylation occurs at Asn776.

Belongs to the peptidase S8 family.

It is found in the secreted. In Arabidopsis thaliana (Mouse-ear cress), this protein is Subtilisin-like protease SBT5.1.